Reading from the N-terminus, the 248-residue chain is Probable transcriptional regulatory protein FTW_1073 (248 aa).

This sequence belongs to the TACO1 family.

It is found in the cytoplasm. In Francisella tularensis subsp. tularensis (strain WY96-3418), this protein is Probable transcriptional regulatory protein FTW_1073.